A 79-amino-acid chain; its full sequence is uncharacterized protein (79 aa).

A helical transmembrane segment spans residues Lys15–Ala37.

The protein localises to the membrane. This is an uncharacterized protein from Dictyostelium discoideum (Social amoeba).